The sequence spans 188 residues: MVPGAAGWCCLVLWLPACVAAHGFRIHDYLYFQVLSPGDIRYIFTATPAKDFGGIFHTRYEQIHLVPAEPPEACGELSNGFFIQDQIALVERGGCSFLSKTRVVQEHGGRAVIISDNAVDNDSFYVEMIQDSTQRTADIPALFLLGRDGYMIRRSLEQHGLPWAIISIPVNVTSIPTFELLQPPWTFW.

An N-terminal signal peptide occupies residues 1 to 21 (MVPGAAGWCCLVLWLPACVAA). The PA domain maps to 83-163 (IQDQIALVER…RSLEQHGLPW (81 aa)). N-linked (GlcNAc...) asparagine glycosylation is present at N171.

Post-translationally, N-glycosylated; required for efficient secretion. In terms of tissue distribution, highly expressed in skeletal muscle, heart and liver. Expressed at intermediate level in kidney.

It localises to the secreted. Its function is as follows. Plays a role in the modulation of physical activity and adiposity. The protein is Protease-associated domain-containing protein 1 of Homo sapiens (Human).